Consider the following 277-residue polypeptide: Diaminopimelate epimerase (277 aa).

3 residues coordinate substrate: Asn13, Gln46, and Asn66. The active-site Proton donor is Cys75. Residues 76–77 (GN), Asn160, Asn193, and 211–212 (ER) contribute to the substrate site. Residue Cys220 is the Proton acceptor of the active site. Position 221–222 (221–222 (GS)) interacts with substrate.

It belongs to the diaminopimelate epimerase family. In terms of assembly, homodimer.

The protein resides in the cytoplasm. It catalyses the reaction (2S,6S)-2,6-diaminopimelate = meso-2,6-diaminopimelate. The protein operates within amino-acid biosynthesis; L-lysine biosynthesis via DAP pathway; DL-2,6-diaminopimelate from LL-2,6-diaminopimelate: step 1/1. Catalyzes the stereoinversion of LL-2,6-diaminopimelate (L,L-DAP) to meso-diaminopimelate (meso-DAP), a precursor of L-lysine and an essential component of the bacterial peptidoglycan. The sequence is that of Diaminopimelate epimerase from Legionella pneumophila (strain Paris).